Reading from the N-terminus, the 107-residue chain is Cytochrome c2 (107 aa).

Residue Q1 is modified to Pyrrolidone carboxylic acid. Heme c is bound by residues C13, C16, H17, and M79.

Belongs to the cytochrome c family. Binds 1 heme c group covalently per subunit.

It localises to the periplasm. Functionally, cytochrome c2 is found mainly in purple, non-sulfur, photosynthetic bacteria where it functions as the electron donor to the oxidized bacteriochlorophyll in the photophosphorylation pathway. However, it may also have a role in the respiratory chain and is found in some non-photosynthetic bacteria. This chain is Cytochrome c2, found in Rhodoplanes tepidamans (Rhodoplanes cryptolactis).